The following is a 406-amino-acid chain: Succinylornithine transaminase (406 aa).

Lysine 252 is modified (N6-(pyridoxal phosphate)lysine).

The protein belongs to the class-III pyridoxal-phosphate-dependent aminotransferase family. AstC subfamily. Pyridoxal 5'-phosphate serves as cofactor.

The catalysed reaction is N(2)-succinyl-L-ornithine + 2-oxoglutarate = N-succinyl-L-glutamate 5-semialdehyde + L-glutamate. It functions in the pathway amino-acid degradation; L-arginine degradation via AST pathway; L-glutamate and succinate from L-arginine: step 3/5. Catalyzes the transamination of N(2)-succinylornithine and alpha-ketoglutarate into N(2)-succinylglutamate semialdehyde and glutamate. Can also act as an acetylornithine aminotransferase. The protein is Succinylornithine transaminase of Escherichia coli O45:K1 (strain S88 / ExPEC).